The following is a 380-amino-acid chain: Erythronate-4-phosphate dehydrogenase (380 aa).

Ser45 and Thr66 together coordinate substrate. NAD(+) is bound by residues Asp146, Thr174, 205 to 207, and Asp231; that span reads ASR. Arg207 is a catalytic residue. The active site involves Glu236. His253 functions as the Proton donor in the catalytic mechanism. An NAD(+)-binding site is contributed by Gly256. Tyr257 serves as a coordination point for substrate.

The protein belongs to the D-isomer specific 2-hydroxyacid dehydrogenase family. PdxB subfamily. In terms of assembly, homodimer.

It localises to the cytoplasm. The enzyme catalyses 4-phospho-D-erythronate + NAD(+) = (R)-3-hydroxy-2-oxo-4-phosphooxybutanoate + NADH + H(+). Its pathway is cofactor biosynthesis; pyridoxine 5'-phosphate biosynthesis; pyridoxine 5'-phosphate from D-erythrose 4-phosphate: step 2/5. Catalyzes the oxidation of erythronate-4-phosphate to 3-hydroxy-2-oxo-4-phosphonooxybutanoate. The protein is Erythronate-4-phosphate dehydrogenase of Pseudomonas putida (strain ATCC 700007 / DSM 6899 / JCM 31910 / BCRC 17059 / LMG 24140 / F1).